The chain runs to 240 residues: MGKRLISQNRGRGTPKYRSPSHKRKGEVKYRSYDEMEKVGKVLGTVIDVLHDPGRSAPVAKVRFANGEERLVLIPEGISVGEQIECGISAEIKPGNVLPLGEIPEGIPVYNIETIPGDGGKLVRAGGCYAHVVAHDIGKTIVKLPSGYAKVLNPACRATIGVVAGGGRKEKPFVKAGKKHHSLSAKAVAWPKVRGVAMNAVDHPYGGGRHQHLGKPSSVSRNTSPGRKVGHIASRRTGRK.

The span at 1 to 11 shows a compositional bias: polar residues; the sequence is MGKRLISQNRG. 2 disordered regions span residues 1–26 and 206–240; these read MGKR…KRKG and GGGR…TGRK. Basic residues-rich tracts occupy residues 13-26 and 228-240; these read GTPK…KRKG and KVGH…TGRK.

Belongs to the universal ribosomal protein uL2 family. As to quaternary structure, part of the 50S ribosomal subunit. Forms a bridge to the 30S subunit in the 70S ribosome.

In terms of biological role, one of the primary rRNA binding proteins. Required for association of the 30S and 50S subunits to form the 70S ribosome, for tRNA binding and peptide bond formation. It has been suggested to have peptidyltransferase activity; this is somewhat controversial. Makes several contacts with the 16S rRNA in the 70S ribosome. This chain is Large ribosomal subunit protein uL2, found in Methanococcus vannielii (strain ATCC 35089 / DSM 1224 / JCM 13029 / OCM 148 / SB).